Here is a 205-residue protein sequence, read N- to C-terminus: Ribosomal RNA small subunit methyltransferase G (205 aa).

S-adenosyl-L-methionine is bound by residues glycine 73, leucine 78, 124-125 (VE), and arginine 138.

It belongs to the methyltransferase superfamily. RNA methyltransferase RsmG family.

It is found in the cytoplasm. The catalysed reaction is guanosine(527) in 16S rRNA + S-adenosyl-L-methionine = N(7)-methylguanosine(527) in 16S rRNA + S-adenosyl-L-homocysteine. Specifically methylates the N7 position of guanine in position 527 of 16S rRNA. The sequence is that of Ribosomal RNA small subunit methyltransferase G from Actinobacillus pleuropneumoniae serotype 7 (strain AP76).